The primary structure comprises 134 residues: D-dopachrome decarboxylase-like protein (134 aa).

The protein belongs to the MIF family.

The protein localises to the cytoplasm. Its function is as follows. May have lyase activity. The protein is D-dopachrome decarboxylase-like protein (DDTL) of Homo sapiens (Human).